A 157-amino-acid polypeptide reads, in one-letter code: MRLEDIRPQPGSTRRRRRLGRGIAAGQGASCGKGMRGQKARKGGGPRPGFEGGQTPLYRRLPKLKHFPRYVRRPQYTLINLRALAKLPAGSEVSLESLMDLGIVTTNDGPLKILGDGEVGVPLTIRAAAITPSARAKVEAAGGRVELVGSQTASAGS.

A disordered region spans residues 1 to 56 (MRLEDIRPQPGSTRRRRRLGRGIAAGQGASCGKGMRGQKARKGGGPRPGFEGGQTP). The span at 23-35 (IAAGQGASCGKGM) shows a compositional bias: gly residues.

Belongs to the universal ribosomal protein uL15 family. In terms of assembly, part of the 50S ribosomal subunit.

In terms of biological role, binds to the 23S rRNA. The sequence is that of Large ribosomal subunit protein uL15 from Synechococcus sp. (strain JA-3-3Ab) (Cyanobacteria bacterium Yellowstone A-Prime).